The primary structure comprises 234 residues: Nitroreductase NfnB (234 aa).

R25–R29 contacts FMN. NADP(+)-binding residues include S55, R105, Y113, and I118. Residues Y137, A181–L182, and R223 contribute to the FMN site.

The protein belongs to the nitroreductase family. As to quaternary structure, homodimer. It depends on FMN as a cofactor.

Functionally, confers resistance to antitubercular drugs benzothiazinone (BTZ) and dinitrobenzamide (DNB). Inactivates BTZ and DNB by reducing an essential nitro group of these compounds to amino group or to hydroxyl amine, respectively, using NADH or NADPH as source of reducing equivalents; two electrons are transferred. Able to reduce the nitro group of bicyclic nitroimidazole PA-824, but not of quinone menadione, nitrofurazone, methyl-4-nitrobenzoate, 4-nitrobenzene methyl sulfonate or 4-nitroacetophenone. The sequence is that of Nitroreductase NfnB from Mycolicibacterium smegmatis (strain ATCC 700084 / mc(2)155) (Mycobacterium smegmatis).